The following is a 199-amino-acid chain: N-(5'-phosphoribosyl)anthranilate isomerase (199 aa).

The protein belongs to the TrpF family.

The catalysed reaction is N-(5-phospho-beta-D-ribosyl)anthranilate = 1-(2-carboxyphenylamino)-1-deoxy-D-ribulose 5-phosphate. Its pathway is amino-acid biosynthesis; L-tryptophan biosynthesis; L-tryptophan from chorismate: step 3/5. The polypeptide is N-(5'-phosphoribosyl)anthranilate isomerase (Lacticaseibacillus casei (strain BL23) (Lactobacillus casei)).